The chain runs to 239 residues: Ribosomal RNA small subunit methyltransferase G (239 aa).

S-adenosyl-L-methionine contacts are provided by residues Gly78, Phe83, 129–130 (AE), and Arg148.

Belongs to the methyltransferase superfamily. RNA methyltransferase RsmG family.

The protein localises to the cytoplasm. Specifically methylates the N7 position of a guanine in 16S rRNA. The protein is Ribosomal RNA small subunit methyltransferase G of Clostridium botulinum (strain Alaska E43 / Type E3).